The primary structure comprises 186 residues: ATP synthase subunit b, chloroplastic (186 aa).

The helical transmembrane segment at 27-43 (IFETNILNLAVVLGILL) threads the bilayer.

This sequence belongs to the ATPase B chain family. F-type ATPases have 2 components, F(1) - the catalytic core - and F(0) - the membrane proton channel. F(1) has five subunits: alpha(3), beta(3), gamma(1), delta(1), epsilon(1). F(0) has four main subunits: a(1), b(1), b'(1) and c(10-14). The alpha and beta chains form an alternating ring which encloses part of the gamma chain. F(1) is attached to F(0) by a central stalk formed by the gamma and epsilon chains, while a peripheral stalk is formed by the delta, b and b' chains.

It localises to the plastid. Its subcellular location is the chloroplast thylakoid membrane. Functionally, f(1)F(0) ATP synthase produces ATP from ADP in the presence of a proton or sodium gradient. F-type ATPases consist of two structural domains, F(1) containing the extramembraneous catalytic core and F(0) containing the membrane proton channel, linked together by a central stalk and a peripheral stalk. During catalysis, ATP synthesis in the catalytic domain of F(1) is coupled via a rotary mechanism of the central stalk subunits to proton translocation. Its function is as follows. Component of the F(0) channel, it forms part of the peripheral stalk, linking F(1) to F(0). This chain is ATP synthase subunit b, chloroplastic, found in Mesostigma viride (Green alga).